The following is a 1011-amino-acid chain: Collagen alpha-2(I) chain (1011 aa).

The disordered stretch occupies residues 1-1011; the sequence is SGGFDFSFLP…FGYEGDFYRA (1011 aa). Proline 10, proline 13, proline 35, and proline 41 each carry 4-hydroxyproline. Residues 28–67 show a composition bias toward low complexity; the sequence is LMGPRGPPGASGAPGPQGFQGPAGEPGEPGQTGPAGARGP. At lysine 106 the chain carries 5-hydroxylysine; alternate. O-linked (Gal...) hydroxylysine; alternate glycosylation is present at lysine 106. Low complexity predominate over residues 167–182; it reads SVGPVGPAGPIGSAGP. A compositionally biased stretch (gly residues) spans 282 to 291; the sequence is GESGGKGEPG. The segment covering 292 to 302 has biased composition (low complexity); the sequence is SAGPQGPPGSS. The span at 323-332 shows a compositional bias: gly residues; the sequence is GLRGGPGSRG. Residues 345 to 361 show a composition bias toward low complexity; that stretch reads PAGARGASGPAGVRGPS. 4-hydroxyproline is present on residues proline 367 and proline 370. Residues 396-415 show a composition bias toward low complexity; it reads LPGIDGRPGPIGPAGARGEA. Residues 464–473 show a composition bias toward gly residues; sequence GVQGGKGEQG. Composition is skewed to low complexity over residues 520 to 537 and 549 to 559; these read PGESGAVGPSGAIGSRGP and EPGVVGAPGTA. Gly residues predominate over residues 560 to 578; it reads GPAGSGGPGERGAAGIPGG. 2 stretches are compositionally biased toward low complexity: residues 588–635 and 642–662; these read RGEV…PRGS and VGPAGPNGFAGPAGAAGQPGA. Positions 663–672 are enriched in basic and acidic residues; the sequence is KGERGTKGPK. Positions 680–690 are enriched in low complexity; the sequence is PTGPVGSAGPA. Residues 700 to 709 show a composition bias toward gly residues; sequence GSRGDGGPPG. The span at 711–720 shows a compositional bias: low complexity; sequence TGFPGAAGRT. Residues 757–766 show a composition bias toward gly residues; it reads GETGAGGPPG. Low complexity-rich tracts occupy residues 774–801 and 809–819; these read SGEPGTAGPPGTAGPQGLLGAPGILGLP and LPGVAGAVGEP. Residues 820 to 834 show a composition bias toward gly residues; sequence GPLGIGPPGARGDGL. Low complexity-rich tracts occupy residues 843–856 and 872–887; these read YAGNAGPVGAAGAP and EPGPVGSVGPVGALGP. Basic and acidic residues predominate over residues 897-908; that stretch reads RGDKGEPGEKGP. A compositionally biased stretch (pro residues) spans 981-993; it reads SGPPGPPGPPGPP.

This sequence belongs to the fibrillar collagen family. As to quaternary structure, trimers of one alpha 2(I) and two alpha 1(I) chains. Interacts (via C-terminus) with TMEM131 (via PapD-L domain); the interaction is direct and is involved in assembly and TRAPPIII ER-to-Golgi transport complex-dependent secretion of collagen. Prolines at the third position of the tripeptide repeating unit (G-X-Y) are hydroxylated in some or all of the chains. Expressed in bones.

The protein localises to the secreted. It localises to the extracellular space. The protein resides in the extracellular matrix. Its function is as follows. Type I collagen is a member of group I collagen (fibrillar forming collagen). This is Collagen alpha-2(I) chain from Neocnus comes (Miller's Hispaniolan ground sloth).